Here is a 288-residue protein sequence, read N- to C-terminus: tRNA-cytidine(32) 2-sulfurtransferase (288 aa).

Residues 70–75 carry the PP-loop motif motif; the sequence is SGGKDS. 3 residues coordinate [4Fe-4S] cluster: Cys145, Cys148, and Cys236.

It belongs to the TtcA family. Homodimer. Requires Mg(2+) as cofactor. [4Fe-4S] cluster serves as cofactor.

The protein localises to the cytoplasm. It carries out the reaction cytidine(32) in tRNA + S-sulfanyl-L-cysteinyl-[cysteine desulfurase] + AH2 + ATP = 2-thiocytidine(32) in tRNA + L-cysteinyl-[cysteine desulfurase] + A + AMP + diphosphate + H(+). It functions in the pathway tRNA modification. Its function is as follows. Catalyzes the ATP-dependent 2-thiolation of cytidine in position 32 of tRNA, to form 2-thiocytidine (s(2)C32). The sulfur atoms are provided by the cysteine/cysteine desulfurase (IscS) system. In Bartonella tribocorum (strain CIP 105476 / IBS 506), this protein is tRNA-cytidine(32) 2-sulfurtransferase.